Here is a 579-residue protein sequence, read N- to C-terminus: Glycine--tRNA ligase (579 aa).

Glu175 contacts glycine. Residues 207–209 (RNE) and 218–219 (RV) contribute to the ATP site. Glu226 lines the glycine pocket. 327–328 (EC) provides a ligand contact to ATP. Position 442-444 (442-444 (EPS)) interacts with glycine. Arg449 is a binding site for ATP.

The protein belongs to the class-II aminoacyl-tRNA synthetase family. In terms of assembly, homodimer.

The enzyme catalyses tRNA(Gly) + glycine + ATP = glycyl-tRNA(Gly) + AMP + diphosphate. It catalyses the reaction 2 ATP + H(+) = P(1),P(4)-bis(5'-adenosyl) tetraphosphate + diphosphate. Catalyzes the ATP-dependent ligation of glycine to the 3'-end of its cognate tRNA, via the formation of an aminoacyl-adenylate intermediate (Gly-AMP). Also produces diadenosine tetraphosphate (Ap4A), a universal pleiotropic signaling molecule needed for cell regulation pathways, by direct condensation of 2 ATPs. Thereby, may play a special role in Ap4A homeostasis. The chain is Glycine--tRNA ligase from Encephalitozoon cuniculi (strain GB-M1) (Microsporidian parasite).